The chain runs to 256 residues: Sec-independent protein translocase protein TatC (256 aa).

Transmembrane regions (helical) follow at residues 25-45, 77-97, 117-137, 158-178, 195-215, and 217-237; these read VICV…IYHF, AIVA…AFIA, ILFY…VFSF, FALA…AIIL, PYII…DVFS, and TLLA…ARFY.

It belongs to the TatC family. The Tat system comprises two distinct complexes: a TatABC complex, containing multiple copies of TatA, TatB and TatC subunits, and a separate TatA complex, containing only TatA subunits. Substrates initially bind to the TatABC complex, which probably triggers association of the separate TatA complex to form the active translocon.

Its subcellular location is the cell inner membrane. Functionally, part of the twin-arginine translocation (Tat) system that transports large folded proteins containing a characteristic twin-arginine motif in their signal peptide across membranes. Together with TatB, TatC is part of a receptor directly interacting with Tat signal peptides. The sequence is that of Sec-independent protein translocase protein TatC from Haemophilus influenzae (strain ATCC 51907 / DSM 11121 / KW20 / Rd).